A 227-amino-acid chain; its full sequence is Cytochrome c oxidase subunit 2 (227 aa).

The Mitochondrial intermembrane segment spans residues 1–14 (MAHAVQYGFQDAAA). The helical transmembrane segment at 15-45 (PIMEELLYFHDHTLMIVFMISSLVLYIISLM) threads the bilayer. Over 46 to 59 (LSTELTHTSTMDAQ) the chain is Mitochondrial matrix. Residues 60–87 (EVETVWTILPAVILILIALPSLRILYMM) traverse the membrane as a helical segment. Residues 88–227 (DEIETPSLTL…YFEEWLLKTL (140 aa)) lie on the Mitochondrial intermembrane side of the membrane. 6 residues coordinate Cu cation: His161, Cys196, Glu198, Cys200, His204, and Met207. Position 198 (Glu198) interacts with Mg(2+). Phosphotyrosine is present on Tyr218.

This sequence belongs to the cytochrome c oxidase subunit 2 family. In terms of assembly, component of the cytochrome c oxidase (complex IV, CIV), a multisubunit enzyme composed of 14 subunits. The complex is composed of a catalytic core of 3 subunits MT-CO1, MT-CO2 and MT-CO3, encoded in the mitochondrial DNA, and 11 supernumerary subunits COX4I, COX5A, COX5B, COX6A, COX6B, COX6C, COX7A, COX7B, COX7C, COX8 and NDUFA4, which are encoded in the nuclear genome. The complex exists as a monomer or a dimer and forms supercomplexes (SCs) in the inner mitochondrial membrane with NADH-ubiquinone oxidoreductase (complex I, CI) and ubiquinol-cytochrome c oxidoreductase (cytochrome b-c1 complex, complex III, CIII), resulting in different assemblies (supercomplex SCI(1)III(2)IV(1) and megacomplex MCI(2)III(2)IV(2)). Found in a complex with TMEM177, COA6, COX18, COX20, SCO1 and SCO2. Interacts with TMEM177 in a COX20-dependent manner. Interacts with COX20. Interacts with COX16. Cu cation serves as cofactor.

Its subcellular location is the mitochondrion inner membrane. The catalysed reaction is 4 Fe(II)-[cytochrome c] + O2 + 8 H(+)(in) = 4 Fe(III)-[cytochrome c] + 2 H2O + 4 H(+)(out). Functionally, component of the cytochrome c oxidase, the last enzyme in the mitochondrial electron transport chain which drives oxidative phosphorylation. The respiratory chain contains 3 multisubunit complexes succinate dehydrogenase (complex II, CII), ubiquinol-cytochrome c oxidoreductase (cytochrome b-c1 complex, complex III, CIII) and cytochrome c oxidase (complex IV, CIV), that cooperate to transfer electrons derived from NADH and succinate to molecular oxygen, creating an electrochemical gradient over the inner membrane that drives transmembrane transport and the ATP synthase. Cytochrome c oxidase is the component of the respiratory chain that catalyzes the reduction of oxygen to water. Electrons originating from reduced cytochrome c in the intermembrane space (IMS) are transferred via the dinuclear copper A center (CU(A)) of subunit 2 and heme A of subunit 1 to the active site in subunit 1, a binuclear center (BNC) formed by heme A3 and copper B (CU(B)). The BNC reduces molecular oxygen to 2 water molecules using 4 electrons from cytochrome c in the IMS and 4 protons from the mitochondrial matrix. This chain is Cytochrome c oxidase subunit 2 (MT-CO2), found in Galago senegalensis (Northern lesser bushbaby).